The primary structure comprises 207 residues: Large ribosomal subunit protein uL4 (207 aa).

Residues 50–76 (KTKTVSEVSGTTKKPFKQKGTGNARQG) are disordered.

It belongs to the universal ribosomal protein uL4 family. In terms of assembly, part of the 50S ribosomal subunit.

Its function is as follows. One of the primary rRNA binding proteins, this protein initially binds near the 5'-end of the 23S rRNA. It is important during the early stages of 50S assembly. It makes multiple contacts with different domains of the 23S rRNA in the assembled 50S subunit and ribosome. In terms of biological role, forms part of the polypeptide exit tunnel. The protein is Large ribosomal subunit protein uL4 of Rickettsia canadensis (strain McKiel).